Consider the following 492-residue polypeptide: Ammonium transporter MEP1 (492 aa).

Topologically, residues 1-18 (MESRTTGPLTTETYDGPT) are extracellular. A helical membrane pass occupies residues 19 to 39 (VAFMILGAALVFFMVPGLGFL). Over 40–49 (YSGLARRKSA) the chain is Cytoplasmic. The helical transmembrane segment at 50 to 70 (LALIWVVLMATLVGILQWYFW) threads the bilayer. Topologically, residues 71–109 (GYSLAFSKSAPNNKFIGNLDSFGFRNVYGKKFDEDAYPE) are extracellular. Residues 110 to 130 (LAYATFQMMFSCVNLSIIAGA) traverse the membrane as a helical segment. Residues 131-140 (TAERGRLLPH) are Cytoplasmic-facing. Residues 141 to 161 (MVFLFILATIGYCPVTYWIWS) form a helical membrane-spanning segment. Residues 162-174 (PGGWAYQWGVLDW) lie on the Extracellular side of the membrane. The helical transmembrane segment at 175-195 (AGGGNIEILSAVSGFVYSWFL) threads the bilayer. Topologically, residues 196-210 (GKRNEKLLINFRPHN) are cytoplasmic. The chain crosses the membrane as a helical span at residues 211-231 (VSLVTLGTSILWFGWLLFNSA). Topologically, residues 232–240 (SSLSPNLRS) are extracellular. The helical transmembrane segment at 241–261 (VYAFMNTCLSAITGGMTWCLL) threads the bilayer. Topologically, residues 262–268 (DYRSEKK) are cytoplasmic. A helical transmembrane segment spans residues 269–289 (WSTVGLCSGIISGLVAATPSS). Residue glycine 290 is a topological domain, extracellular. The helical transmembrane segment at 291–311 (CITLYGSLIQGIVAGVVCNFA) threads the bilayer. The Cytoplasmic segment spans residues 312–331 (TKLKYYAKVDDAMDILAEHG). A helical transmembrane segment spans residues 332–352 (VAGVIGLIFNALFGADWVIGM). Over 353 to 373 (DGTTEHEGGWVTHNYKQMYKQ) the chain is Extracellular. Residues 374-394 (IAYIAASIGYTAAVTAIICFV) form a helical membrane-spanning segment. Residues 395–492 (LGYIPGMRLR…PIHQEDPANR (98 aa)) lie on the Cytoplasmic side of the membrane. Phosphoserine occurs at positions 442 and 445. The interval 455-492 (HLAAERSSSGTNSSSDGNGEMIQSEKILPIHQEDPANR) is disordered. Over residues 461-473 (SSSGTNSSSDGNG) the composition is skewed to low complexity.

Belongs to the ammonia transporter channel (TC 1.A.11.2) family.

Its subcellular location is the membrane. Its function is as follows. Transporter for ammonium (both charged and uncharged NH3 and NH4) to use as a nitrogen source. Can also transport methylamine. The affinity of MEP1 is about twenty times lower than that of MEP2. MEP3 has the lowest affinity. The protein is Ammonium transporter MEP1 (MEP1) of Saccharomyces cerevisiae (strain ATCC 204508 / S288c) (Baker's yeast).